A 429-amino-acid polypeptide reads, in one-letter code: Glutamyl-tRNA reductase (429 aa).

Residues Thr-56–Arg-59, Ser-119, Glu-124–Gln-126, and Gln-130 each bind substrate. The active-site Nucleophile is the Cys-57. Position 199-204 (Gly-199–Ile-204) interacts with NADP(+).

This sequence belongs to the glutamyl-tRNA reductase family. In terms of assembly, homodimer.

It catalyses the reaction (S)-4-amino-5-oxopentanoate + tRNA(Glu) + NADP(+) = L-glutamyl-tRNA(Glu) + NADPH + H(+). Its pathway is porphyrin-containing compound metabolism; protoporphyrin-IX biosynthesis; 5-aminolevulinate from L-glutamyl-tRNA(Glu): step 1/2. In terms of biological role, catalyzes the NADPH-dependent reduction of glutamyl-tRNA(Glu) to glutamate 1-semialdehyde (GSA). The polypeptide is Glutamyl-tRNA reductase (Herminiimonas arsenicoxydans).